Reading from the N-terminus, the 250-residue chain is MAAGTSNYWEDLRKQARQLENELDLKLVSFSKLCTSYSHSSARDGRRDRYSSDTTPLLNGSSQDRMFETMAIEIEQLLARLTGINDKMAEYTSSAGVPSLNAALMHTLQRHRDILQDYTHEFHKTKANFVAIRERENLMGSVRKDIESYKSGSGVNNRRTELFLKEHDHLRNSDRLIEETISIAMATKENMTSQRGMLKSIQSKMNTLANRFPAVNSLIQRINLRKRRDSLILGGVIGVCTILLLLYAFH.

Position 2 is an N-acetylalanine (Ala-2). At 2-229 the chain is on the cytoplasmic side; it reads AAGTSNYWED…QRINLRKRRD (228 aa). A coiled-coil region spans residues 10 to 30; it reads EDLRKQARQLENELDLKLVSF. Positions 39–59 are disordered; that stretch reads HSSARDGRRDRYSSDTTPLLN. Residues 41–51 show a composition bias toward basic and acidic residues; sequence SARDGRRDRYS. A coiled-coil region spans residues 70–93; that stretch reads MAIEIEQLLARLTGINDKMAEYTS. Ser-141 carries the phosphoserine modification. The helical; Anchor for type IV membrane protein transmembrane segment at 230–250 threads the bilayer; that stretch reads SLILGGVIGVCTILLLLYAFH.

The protein belongs to the GOSR1 family. In terms of assembly, component of several multiprotein Golgi SNARE complexes. Identified in a SNARE complex with BET1, STX5 and YKT6, in a SNARE complex with BET1L, STX5 and YKT6, in a SNARE complex with STX5, GOSR2, SEC22B and BET1, and in complex with STX5 and COG3. Interacts with GABARAPL2.

Its subcellular location is the golgi apparatus membrane. Functionally, involved in transport from the ER to the Golgi apparatus as well as in intra-Golgi transport. It belongs to a super-family of proteins called t-SNAREs or soluble NSF (N-ethylmaleimide-sensitive factor) attachment protein receptor. May play a protective role against hydrogen peroxide induced cytotoxicity under glutathione depleted conditions in neuronal cells by regulating the intracellular ROS levels via inhibition of p38 MAPK (MAPK11, MAPK12, MAPK13 and MAPK14). Participates in docking and fusion stage of ER to cis-Golgi transport. Plays an important physiological role in VLDL-transport vesicle-Golgi fusion and thus in VLDL delivery to the hepatic cis-Golgi. In Bos taurus (Bovine), this protein is Golgi SNAP receptor complex member 1 (GOSR1).